A 192-amino-acid polypeptide reads, in one-letter code: Protein GrpE (192 aa).

The segment covering 1-20 (MEERNEQVVEEVKEEVKEAQ) has biased composition (basic and acidic residues). A disordered region spans residues 1–39 (MEERNEQVVEEVKEEVKEAQVEEAVTSEDSEESVEEKSE). Residues 25-34 (VTSEDSEESV) show a composition bias toward acidic residues.

This sequence belongs to the GrpE family. Homodimer.

It is found in the cytoplasm. In terms of biological role, participates actively in the response to hyperosmotic and heat shock by preventing the aggregation of stress-denatured proteins, in association with DnaK and GrpE. It is the nucleotide exchange factor for DnaK and may function as a thermosensor. Unfolded proteins bind initially to DnaJ; upon interaction with the DnaJ-bound protein, DnaK hydrolyzes its bound ATP, resulting in the formation of a stable complex. GrpE releases ADP from DnaK; ATP binding to DnaK triggers the release of the substrate protein, thus completing the reaction cycle. Several rounds of ATP-dependent interactions between DnaJ, DnaK and GrpE are required for fully efficient folding. The polypeptide is Protein GrpE (Bacillus cereus (strain ATCC 10987 / NRS 248)).